A 39-amino-acid polypeptide reads, in one-letter code: Large ribosomal subunit protein bL36 (39 aa).

It belongs to the bacterial ribosomal protein bL36 family.

The polypeptide is Large ribosomal subunit protein bL36 (Pediococcus pentosaceus (strain ATCC 25745 / CCUG 21536 / LMG 10740 / 183-1w)).